Here is a 213-residue protein sequence, read N- to C-terminus: MKYIIEHMEEGFSEWVILEYSQILREVGAENLILSSLPESTTEKDIPQRLLKLGLRWTTKDLKGINEDFKDLELLKDGRVCLLDPRATIDLQPEDATKFDYFVFGGILGDHPPRDRTKELKTAYPNLLISRRLGDKQMTTDTAIRTTQLIIKDRIAFEDIKFIDYPEFRFNKNEATEMPFRYVLDKEGKPILPEGMLDLIKKDSAQSLDDLLM.

Ser204 and Ser207 each carry phosphoserine.

It belongs to the class IV-like SAM-binding methyltransferase superfamily. Protein arginine N-methyltransferase SFM1 family.

Its subcellular location is the cytoplasm. S-adenosyl-L-methionine-dependent protein-arginine N-methyltransferase that monomethylates ribosomal protein S3 (RPS3) at 'Arg-146'. In Saccharomyces cerevisiae (strain ATCC 204508 / S288c) (Baker's yeast), this protein is Protein arginine N-methyltransferase SFM1.